The following is a 214-amino-acid chain: Thiamine-phosphate synthase (214 aa).

4-amino-2-methyl-5-(diphosphooxymethyl)pyrimidine is bound by residues glutamine 37 to lysine 41 and asparagine 73. Residues aspartate 74 and aspartate 93 each coordinate Mg(2+). Residue serine 112 participates in 4-amino-2-methyl-5-(diphosphooxymethyl)pyrimidine binding. Threonine 139–serine 141 provides a ligand contact to 2-[(2R,5Z)-2-carboxy-4-methylthiazol-5(2H)-ylidene]ethyl phosphate. Position 142 (lysine 142) interacts with 4-amino-2-methyl-5-(diphosphooxymethyl)pyrimidine. 2-[(2R,5Z)-2-carboxy-4-methylthiazol-5(2H)-ylidene]ethyl phosphate contacts are provided by residues glycine 171 and isoleucine 191–serine 192.

Belongs to the thiamine-phosphate synthase family. Mg(2+) is required as a cofactor.

The enzyme catalyses 2-[(2R,5Z)-2-carboxy-4-methylthiazol-5(2H)-ylidene]ethyl phosphate + 4-amino-2-methyl-5-(diphosphooxymethyl)pyrimidine + 2 H(+) = thiamine phosphate + CO2 + diphosphate. The catalysed reaction is 2-(2-carboxy-4-methylthiazol-5-yl)ethyl phosphate + 4-amino-2-methyl-5-(diphosphooxymethyl)pyrimidine + 2 H(+) = thiamine phosphate + CO2 + diphosphate. It carries out the reaction 4-methyl-5-(2-phosphooxyethyl)-thiazole + 4-amino-2-methyl-5-(diphosphooxymethyl)pyrimidine + H(+) = thiamine phosphate + diphosphate. The protein operates within cofactor biosynthesis; thiamine diphosphate biosynthesis; thiamine phosphate from 4-amino-2-methyl-5-diphosphomethylpyrimidine and 4-methyl-5-(2-phosphoethyl)-thiazole: step 1/1. Functionally, condenses 4-methyl-5-(beta-hydroxyethyl)thiazole monophosphate (THZ-P) and 2-methyl-4-amino-5-hydroxymethyl pyrimidine pyrophosphate (HMP-PP) to form thiamine monophosphate (TMP). This Listeria monocytogenes serotype 4b (strain F2365) protein is Thiamine-phosphate synthase.